We begin with the raw amino-acid sequence, 302 residues long: Possible hemolysin C (302 aa).

2 CBS domains span residues 79 to 141 (MVPR…NFRL) and 144 to 201 (LIRK…IDDE).

The protein belongs to the UPF0053 family. Hemolysin C subfamily.

The protein is Possible hemolysin C (tlyC) of Rickettsia bellii (strain OSU 85-389).